A 129-amino-acid polypeptide reads, in one-letter code: Phenazine antibiotic resistance protein EhpR (129 aa).

The region spanning 10–128 (TPNLQLVYVS…DGHIIRVCPL (119 aa)) is the VOC domain. D-alanylgriseoluteate contacts are provided by residues 42–43 (RY) and tryptophan 57.

Homodimer.

Functionally, required for resistance to the phenazine antibiotic D-alanylgriseoluteic acid (AGA), an antibiotic produced by E.agglomerans itself, and thus protects the bacterium against phenazine toxicity. Probably binds AGA and acts as a chaperone that works in tandem with a membrane transporter for subsequent antibiotic secretion. The chain is Phenazine antibiotic resistance protein EhpR from Enterobacter agglomerans (Erwinia herbicola).